The primary structure comprises 281 residues: Bifunctional protein FolD (281 aa).

Residues 161–163 (GRS), S186, and I227 contribute to the NADP(+) site.

The protein belongs to the tetrahydrofolate dehydrogenase/cyclohydrolase family. As to quaternary structure, homodimer.

The catalysed reaction is (6R)-5,10-methylene-5,6,7,8-tetrahydrofolate + NADP(+) = (6R)-5,10-methenyltetrahydrofolate + NADPH. It catalyses the reaction (6R)-5,10-methenyltetrahydrofolate + H2O = (6R)-10-formyltetrahydrofolate + H(+). It functions in the pathway one-carbon metabolism; tetrahydrofolate interconversion. Catalyzes the oxidation of 5,10-methylenetetrahydrofolate to 5,10-methenyltetrahydrofolate and then the hydrolysis of 5,10-methenyltetrahydrofolate to 10-formyltetrahydrofolate. This is Bifunctional protein FolD from Brachyspira hyodysenteriae (strain ATCC 49526 / WA1).